Reading from the N-terminus, the 296-residue chain is Nucleotide-binding protein SMU_1306c (296 aa).

13-20 (GMSGAGKT) is an ATP binding site. Residue 63–66 (DMRS) participates in GTP binding.

The protein belongs to the RapZ-like family.

In terms of biological role, displays ATPase and GTPase activities. This chain is Nucleotide-binding protein SMU_1306c, found in Streptococcus mutans serotype c (strain ATCC 700610 / UA159).